We begin with the raw amino-acid sequence, 690 residues long: Translation initiation factor IF-2 (690 aa).

The tr-type G domain maps to 178–346; that stretch reads PRPPVVTVMG…MILLVAEMNE (169 aa). A G1 region spans residues 187 to 194; the sequence is GHVDHGKT. Residue 187 to 194 coordinates GTP; sequence GHVDHGKT. A G2 region spans residues 212-216; sequence GITQS. Positions 233 to 236 are G3; the sequence is DTPG. GTP-binding positions include 233 to 237 and 287 to 290; these read DTPGH and NKID. The G4 stretch occupies residues 287–290; the sequence is NKID. Positions 324–326 are G5; that stretch reads SAR.

The protein belongs to the TRAFAC class translation factor GTPase superfamily. Classic translation factor GTPase family. IF-2 subfamily.

Its subcellular location is the cytoplasm. One of the essential components for the initiation of protein synthesis. Protects formylmethionyl-tRNA from spontaneous hydrolysis and promotes its binding to the 30S ribosomal subunits. Also involved in the hydrolysis of GTP during the formation of the 70S ribosomal complex. The chain is Translation initiation factor IF-2 from Thermotoga sp. (strain RQ2).